A 368-amino-acid polypeptide reads, in one-letter code: Methionine import ATP-binding protein MetN (368 aa).

Residues 5-260 enclose the ABC transporter domain; it reads IELNNLSVQF…PKEALTKQFI (256 aa). 41 to 48 is a binding site for ATP; that stretch reads GYSGAGKS.

The protein belongs to the ABC transporter superfamily. Methionine importer (TC 3.A.1.24) family. The complex is composed of two ATP-binding proteins (MetN), two transmembrane proteins (MetI) and a solute-binding protein (MetQ).

It is found in the cell membrane. It carries out the reaction L-methionine(out) + ATP + H2O = L-methionine(in) + ADP + phosphate + H(+). It catalyses the reaction D-methionine(out) + ATP + H2O = D-methionine(in) + ADP + phosphate + H(+). Part of the ABC transporter complex MetNIQ involved in methionine import. Responsible for energy coupling to the transport system. The chain is Methionine import ATP-binding protein MetN from Lactococcus lactis subsp. cremoris (strain SK11).